The chain runs to 137 residues: ATP synthase epsilon chain (137 aa).

Belongs to the ATPase epsilon chain family. In terms of assembly, F-type ATPases have 2 components, CF(1) - the catalytic core - and CF(0) - the membrane proton channel. CF(1) has five subunits: alpha(3), beta(3), gamma(1), delta(1), epsilon(1). CF(0) has three main subunits: a, b and c.

It is found in the cellular thylakoid membrane. Functionally, produces ATP from ADP in the presence of a proton gradient across the membrane. In Trichormus variabilis (strain ATCC 29413 / PCC 7937) (Anabaena variabilis), this protein is ATP synthase epsilon chain.